The chain runs to 123 residues: Protein Wnt-7(I) (123 aa).

Residue serine 1 is the site of O-palmitoleoyl serine; by PORCN attachment. A disulfide bridge links cysteine 89 with cysteine 104. An N-linked (GlcNAc...) asparagine glycan is attached at asparagine 90. The Microbody targeting signal motif lies at 121 to 123 (CKF).

It belongs to the Wnt family. In terms of processing, palmitoleoylation is required for efficient binding to frizzled receptors. Depalmitoleoylation leads to Wnt signaling pathway inhibition.

The protein resides in the secreted. It localises to the extracellular space. It is found in the extracellular matrix. In terms of biological role, ligand for members of the frizzled family of seven transmembrane receptors. Probable developmental protein. May be a signaling molecule which affects the development of discrete regions of tissues. Is likely to signal over only few cell diameters. The polypeptide is Protein Wnt-7(I) (WNT-7(I)) (Eptatretus stoutii (Pacific hagfish)).